The sequence spans 154 residues: Prefoldin subunit 5 (154 aa).

The residue at position 2 (alanine 2) is an N-acetylalanine. Lysine 42 carries the post-translational modification N6-acetyllysine. A Phosphoserine modification is found at serine 56.

Belongs to the prefoldin subunit alpha family. As to quaternary structure, heterohexamer of two PFD-alpha type and four PFD-beta type subunits.

The protein resides in the nucleus. Functionally, binds specifically to cytosolic chaperonin (c-CPN) and transfers target proteins to it. Binds to nascent polypeptide chain and promotes folding in an environment in which there are many competing pathways for nonnative proteins. Represses the transcriptional activity of MYC. This is Prefoldin subunit 5 (Pfdn5) from Mus musculus (Mouse).